Here is a 716-residue protein sequence, read N- to C-terminus: Fatty acid oxidation complex subunit alpha (716 aa).

Positions 1–189 (MIYQSPTIQV…KVGAVDAVVA (189 aa)) are enoyl-CoA hydratase/isomerase. Position 296 (Asp-296) interacts with substrate. The 3-hydroxyacyl-CoA dehydrogenase stretch occupies residues 311-716 (KEVKNAAVLG…ATNNGSYYQA (406 aa)). Residues Met-324, Asp-343, 400–402 (VVE), Lys-407, and Ser-429 contribute to the NAD(+) site. His-450 (for 3-hydroxyacyl-CoA dehydrogenase activity) is an active-site residue. Asn-453 is a binding site for NAD(+). The substrate site is built by Asn-500 and Tyr-660.

This sequence in the N-terminal section; belongs to the enoyl-CoA hydratase/isomerase family. It in the C-terminal section; belongs to the 3-hydroxyacyl-CoA dehydrogenase family. Heterotetramer of two alpha chains (FadB) and two beta chains (FadA).

It carries out the reaction a (3S)-3-hydroxyacyl-CoA + NAD(+) = a 3-oxoacyl-CoA + NADH + H(+). The catalysed reaction is a (3S)-3-hydroxyacyl-CoA = a (2E)-enoyl-CoA + H2O. It catalyses the reaction a 4-saturated-(3S)-3-hydroxyacyl-CoA = a (3E)-enoyl-CoA + H2O. The enzyme catalyses (3S)-3-hydroxybutanoyl-CoA = (3R)-3-hydroxybutanoyl-CoA. It carries out the reaction a (3Z)-enoyl-CoA = a 4-saturated (2E)-enoyl-CoA. The catalysed reaction is a (3E)-enoyl-CoA = a 4-saturated (2E)-enoyl-CoA. Its pathway is lipid metabolism; fatty acid beta-oxidation. In terms of biological role, involved in the aerobic and anaerobic degradation of long-chain fatty acids via beta-oxidation cycle. Catalyzes the formation of 3-oxoacyl-CoA from enoyl-CoA via L-3-hydroxyacyl-CoA. It can also use D-3-hydroxyacyl-CoA and cis-3-enoyl-CoA as substrate. The sequence is that of Fatty acid oxidation complex subunit alpha from Shewanella putrefaciens (strain CN-32 / ATCC BAA-453).